The chain runs to 449 residues: UDP-N-acetylmuramoylalanine--D-glutamate ligase (449 aa).

An ATP-binding site is contributed by 116-122; it reads GSNGKST.

This sequence belongs to the MurCDEF family.

The protein resides in the cytoplasm. It carries out the reaction UDP-N-acetyl-alpha-D-muramoyl-L-alanine + D-glutamate + ATP = UDP-N-acetyl-alpha-D-muramoyl-L-alanyl-D-glutamate + ADP + phosphate + H(+). Its pathway is cell wall biogenesis; peptidoglycan biosynthesis. In terms of biological role, cell wall formation. Catalyzes the addition of glutamate to the nucleotide precursor UDP-N-acetylmuramoyl-L-alanine (UMA). The chain is UDP-N-acetylmuramoylalanine--D-glutamate ligase from Shewanella violacea (strain JCM 10179 / CIP 106290 / LMG 19151 / DSS12).